The primary structure comprises 361 residues: Replication factor C subunit 3 (361 aa).

Residues 1–28 show a composition bias toward low complexity; sequence MAGATAATPMDIDAAAPPPGAAAKGKAP. A disordered region spans residues 1-39; it reads MAGATAATPMDIDAAAPPPGAAAKGKAPLSSTPGGRAAP. 77–84 provides a ligand contact to ATP; sequence YGPPGTGK.

Belongs to the activator 1 small subunits family. As to quaternary structure, heterotetramer of subunits RFC2, RFC3, RFC4 and RFC5 that can form a complex with RFC1. Expressed in roots, leaves, shoot apical meristem (SAM), flag leaves and panicles.

The protein localises to the nucleus. Functionally, may be involved in DNA replication and thus regulate cell proliferation. The chain is Replication factor C subunit 3 (RFC3) from Oryza sativa subsp. japonica (Rice).